Consider the following 354-residue polypeptide: uncharacterized protein (354 aa).

An N-terminal signal peptide occupies residues 1-21; that stretch reads MRYLLIVITFFMGFSSLPAWA.

This sequence to E.coli YbgO.

In terms of biological role, may be involved in a fimbrial system chaperoned by YqiH and exported by YqiG. This is an uncharacterized protein from Escherichia coli (strain K12).